Reading from the N-terminus, the 152-residue chain is Anaerobic nitrite reductase HBI (152 aa).

The Globin domain maps to alanine 2–lysine 151. Positions glutamate 35–glutamate 39 match the Homodimerization motif. Heme b contacts are provided by serine 45, lysine 59, histidine 63, arginine 93, and histidine 98. The Homodimerization signature appears at aspartate 105–glycine 117.

It belongs to the plant globin family. In terms of assembly, homodimer. Heme b serves as cofactor. Root nodules.

It is found in the cytoplasm. It localises to the nucleus. The enzyme catalyses Fe(III)-heme b-[protein] + nitric oxide + H2O = Fe(II)-heme b-[protein] + nitrite + 2 H(+). Functionally, phytoglobin that reduces nitrite to nitric oxide (NO) under anoxic conditions (e.g. during flooding or in waterlogged soil) and upon root nodulation. Required for general plant development and during nodulation, especially for the onset of symbiosis. Monitors nitric oxide (NO) levels during early phase of the nitrogen-fixing symbiosis and buffers oxygen in functioning nodules. May not function as an oxygen storage or transport protein. Has an unusually high affinity for O(2) through a hexacoordinate heme iron because of a very low dissociation constant. The protein is Anaerobic nitrite reductase HBI of Casuarina glauca (Swamp oak).